The following is a 351-amino-acid chain: MASITLKDLVKSYGDTEVLHHIDGEINDGEFIVIVGPSGCGKSTLLRMIAGLETVTSGDIKICDRVVNDLEPANRDIAMVFQNYALYPHMSVRENMGYGLKIRGNSKADINRRVEEAAEILEIGQYLDRKPRQLSGGQRQRVAMGRAIVRDPQVFLFDEPLSNLDAKLRVQMRLEIRKLQQRLGVTSIYVTHDQVEAMTLGDRLMVLNGGYVEQFGTPIELYDRPATLFVAGFIGSPSMNFLPAEIDAGMVTLENGARLAGGGSAAGKVTLGLRPEHLVADDNGPVEVNVQLCEQLGAITLLHGHLNGTDTECVASMPGHVTAAPGTLMRFSIAPENLHMFDPQTGKRVAE.

Residues Ile-4 to Ile-234 form the ABC transporter domain. An ATP-binding site is contributed by Gly-36–Ser-43.

This sequence belongs to the ABC transporter superfamily. sn-glycerol-3-phosphate importer (TC 3.A.1.1.3) family. In terms of assembly, the complex is composed of two ATP-binding proteins (UgpC), two transmembrane proteins (UgpA and UgpE) and a solute-binding protein (UgpB).

The protein localises to the cell inner membrane. The catalysed reaction is sn-glycerol 3-phosphate(out) + ATP + H2O = sn-glycerol 3-phosphate(in) + ADP + phosphate + H(+). In terms of biological role, part of the ABC transporter complex UgpBAEC involved in sn-glycerol-3-phosphate (G3P) import. Responsible for energy coupling to the transport system. The polypeptide is sn-glycerol-3-phosphate import ATP-binding protein UgpC (Ruegeria sp. (strain TM1040) (Silicibacter sp.)).